A 207-amino-acid chain; its full sequence is Protein 6b (207 aa).

The disordered stretch occupies residues 161–185; that stretch reads NTLEEGEDDDDEMDDEGEAGGAEPR. Acidic residues predominate over residues 164–178; it reads EEGEDDDDEMDDEGE.

Its function is as follows. Involved in tumor formation and increases auxin and cytokinin effects in host plants. The sequence is that of Protein 6b (6b) from Agrobacterium tumefaciens (strain 15955).